A 136-amino-acid polypeptide reads, in one-letter code: MIFINKGTKHFFYKKKLYIFNVIKFSKFNKFYLNFIINKILLICYSKGKGFQGVVKRWNFKTKDKSHGNSLSYRTLGSTGQCQDPGRVFKKKKMPGRMGNKKFSLFVNIFFRKKNYFFLKKILPGVKNDILLGKIL.

An N5-methylglutamine modification is found at Q83.

Belongs to the universal ribosomal protein uL3 family. In terms of assembly, part of the 50S ribosomal subunit. Forms a cluster with proteins L14 and L19. Methylated by PrmB.

One of the primary rRNA binding proteins, it binds directly near the 3'-end of the 23S rRNA, where it nucleates assembly of the 50S subunit. The chain is Large ribosomal subunit protein uL3 (rplC) from Carsonella ruddii.